Here is a 274-residue protein sequence, read N- to C-terminus: tRNA-cytidine(32) 2-sulfurtransferase (274 aa).

Positions 40-45 match the PP-loop motif motif; it reads SGGKDS. Cysteine 115, cysteine 118, and cysteine 206 together coordinate [4Fe-4S] cluster.

Belongs to the TtcA family. Homodimer. It depends on Mg(2+) as a cofactor. Requires [4Fe-4S] cluster as cofactor.

The protein resides in the cytoplasm. The enzyme catalyses cytidine(32) in tRNA + S-sulfanyl-L-cysteinyl-[cysteine desulfurase] + AH2 + ATP = 2-thiocytidine(32) in tRNA + L-cysteinyl-[cysteine desulfurase] + A + AMP + diphosphate + H(+). It functions in the pathway tRNA modification. Catalyzes the ATP-dependent 2-thiolation of cytidine in position 32 of tRNA, to form 2-thiocytidine (s(2)C32). The sulfur atoms are provided by the cysteine/cysteine desulfurase (IscS) system. In Pseudomonas putida (strain GB-1), this protein is tRNA-cytidine(32) 2-sulfurtransferase.